Here is a 433-residue protein sequence, read N- to C-terminus: Serine hydroxymethyltransferase (433 aa).

(6S)-5,6,7,8-tetrahydrofolate-binding positions include Leu-132 and 136–138 (GHL). Lys-241 bears the N6-(pyridoxal phosphate)lysine mark.

It belongs to the SHMT family. As to quaternary structure, homodimer. The cofactor is pyridoxal 5'-phosphate.

Its subcellular location is the cytoplasm. It catalyses the reaction (6R)-5,10-methylene-5,6,7,8-tetrahydrofolate + glycine + H2O = (6S)-5,6,7,8-tetrahydrofolate + L-serine. Its pathway is one-carbon metabolism; tetrahydrofolate interconversion. It functions in the pathway amino-acid biosynthesis; glycine biosynthesis; glycine from L-serine: step 1/1. Functionally, catalyzes the reversible interconversion of serine and glycine with tetrahydrofolate (THF) serving as the one-carbon carrier. This reaction serves as the major source of one-carbon groups required for the biosynthesis of purines, thymidylate, methionine, and other important biomolecules. Also exhibits THF-independent aldolase activity toward beta-hydroxyamino acids, producing glycine and aldehydes, via a retro-aldol mechanism. This is Serine hydroxymethyltransferase from Rhodopseudomonas palustris (strain BisA53).